The primary structure comprises 324 residues: o-succinylbenzoate synthase (324 aa).

K135 acts as the Proton donor in catalysis. 3 residues coordinate Mg(2+): D163, E192, and D215. K237 serves as the catalytic Proton acceptor.

Belongs to the mandelate racemase/muconate lactonizing enzyme family. MenC type 1 subfamily. A divalent metal cation serves as cofactor.

The catalysed reaction is (1R,6R)-6-hydroxy-2-succinyl-cyclohexa-2,4-diene-1-carboxylate = 2-succinylbenzoate + H2O. It functions in the pathway quinol/quinone metabolism; 1,4-dihydroxy-2-naphthoate biosynthesis; 1,4-dihydroxy-2-naphthoate from chorismate: step 4/7. Its pathway is quinol/quinone metabolism; menaquinone biosynthesis. Functionally, converts 2-succinyl-6-hydroxy-2,4-cyclohexadiene-1-carboxylate (SHCHC) to 2-succinylbenzoate (OSB). The polypeptide is o-succinylbenzoate synthase (Aliivibrio salmonicida (strain LFI1238) (Vibrio salmonicida (strain LFI1238))).